Here is a 385-residue protein sequence, read N- to C-terminus: MEQQKQKKRKVVSKSKRTQSKSASSLPLDLTSEILLRLPEKSIARFRCVSKLWLSITTDPYFINLFETRSPRPSLLVCFIENDKLFVSSIPQHLHSLQNSKRSYSSSQLFIVIIWNYQKDVGLICFKTSKMPIVWNPSKRQLITLPIPRLSWNNIIVFLGYDPVEGKHKVMCLPFRRSSDVCQVLTLGPAQEFSWITVKTYHKHCSDYQSSGRCIKGVVYYIAQVYHTHAWVLMCFDVRSEKFDMIKLHADIYREILITYEGRIACVEKRTTKDDYIALCILEDAKKDKWSSKDILAPFGHFDERLRTFFQLKGCTHDGEFIFVSSTFRKMDYILFFDPVKKTFRRFELKEIADDQARVNNGDPYGPIFAFCAFLDHVESQMSLQ.

The segment covering 1-19 (MEQQKQKKRKVVSKSKRTQ) has biased composition (basic residues). The tract at residues 1–24 (MEQQKQKKRKVVSKSKRTQSKSAS) is disordered. Positions 20–69 (SKSASSLPLDLTSEILLRLPEKSIARFRCVSKLWLSITTDPYFINLFETR) constitute an F-box domain.

This is Putative F-box protein At1g47765 from Arabidopsis thaliana (Mouse-ear cress).